The sequence spans 328 residues: Malate dehydrogenase (328 aa).

NAD(+) is bound at residue 11 to 17; the sequence is GAAGQIG. Arg92 and Arg98 together coordinate substrate. Residues Asn105, Gln112, and 129 to 131 contribute to the NAD(+) site; that span reads VGN. Positions 131 and 162 each coordinate substrate. His187 functions as the Proton acceptor in the catalytic mechanism.

Belongs to the LDH/MDH superfamily. MDH type 2 family.

It carries out the reaction (S)-malate + NAD(+) = oxaloacetate + NADH + H(+). Its function is as follows. Catalyzes the reversible oxidation of malate to oxaloacetate. The chain is Malate dehydrogenase from Coxiella burnetii (strain RSA 493 / Nine Mile phase I).